A 721-amino-acid chain; its full sequence is Glycine--tRNA ligase beta subunit (721 aa).

It belongs to the class-II aminoacyl-tRNA synthetase family. As to quaternary structure, tetramer of two alpha and two beta subunits.

Its subcellular location is the cytoplasm. The catalysed reaction is tRNA(Gly) + glycine + ATP = glycyl-tRNA(Gly) + AMP + diphosphate. This Sinorhizobium medicae (strain WSM419) (Ensifer medicae) protein is Glycine--tRNA ligase beta subunit.